We begin with the raw amino-acid sequence, 472 residues long: Putative cytochrome P450 135B1 (472 aa).

Cys-388 provides a ligand contact to heme. Positions 442–472 are disordered; sequence RDVSATSQATAQGAGCPAARGGGPSRAVGSQ. Residues 452-472 show a composition bias toward low complexity; the sequence is AQGAGCPAARGGGPSRAVGSQ.

It belongs to the cytochrome P450 family. It depends on heme as a cofactor.

The protein is Putative cytochrome P450 135B1 (cyp135B1) of Mycobacterium bovis (strain ATCC BAA-935 / AF2122/97).